The primary structure comprises 476 residues: Glycogen synthase (476 aa).

ADP-alpha-D-glucose is bound at residue Lys-15.

Belongs to the glycosyltransferase 1 family. Bacterial/plant glycogen synthase subfamily.

The enzyme catalyses [(1-&gt;4)-alpha-D-glucosyl](n) + ADP-alpha-D-glucose = [(1-&gt;4)-alpha-D-glucosyl](n+1) + ADP + H(+). The protein operates within glycan biosynthesis; glycogen biosynthesis. Its function is as follows. Synthesizes alpha-1,4-glucan chains using ADP-glucose. The sequence is that of Glycogen synthase from Mycoplasma mobile (strain ATCC 43663 / 163K / NCTC 11711) (Mesomycoplasma mobile).